The following is a 472-amino-acid chain: Sarcalumenin (472 aa).

An N-terminal signal peptide occupies residues 1 to 19; sequence MRALLLFCFVASLLLSGQA. The region spanning 89–330 is the Dynamin-type G domain; that stretch reads ITSKPMVLFL…IENRLENKIA (242 aa). A G1 motif region spans residues 99–106; it reads GPWSVGKS. Residue S102 is glycosylated (N-linked (GlcNAc...) asparagine). Positions 127-128 are G2 motif; the sequence is EP. The G3 motif stretch occupies residues 189-192; sequence DTPG. The segment at 254–257 is G4 motif; it reads NKAD. Residue P277 is a region of interest, G5 motif. N-linked (GlcNAc...) asparagine glycosylation is found at N280 and N388.

It belongs to the TRAFAC class dynamin-like GTPase superfamily. Dynamin/Fzo/YdjA family. In terms of processing, N-glycosylated. As to expression, detected in skeletal muscle.

The protein localises to the sarcoplasmic reticulum lumen. The protein resides in the sarcoplasmic reticulum membrane. The sequence is that of Sarcalumenin (SRL) from Oryctolagus cuniculus (Rabbit).